The primary structure comprises 181 residues: MENRNRNSRPIKNQDPVNEFIRAHQVLVIDEDKQNLGVMSKRQALEIARSKNLDLYQVGVQPDGTVITRIVNFGKLKYEQQKKSKEAKKHQTKIENKEIRITVNIGKHDLETKARKAKEFLEEGSRVKVSLKFRGREVVYLDLGQQTLNNFFELVSDVGKMEKEAKLNGKFLDMYIVPKKN.

Belongs to the IF-3 family. In terms of assembly, monomer.

Its subcellular location is the cytoplasm. In terms of biological role, IF-3 binds to the 30S ribosomal subunit and shifts the equilibrium between 70S ribosomes and their 50S and 30S subunits in favor of the free subunits, thus enhancing the availability of 30S subunits on which protein synthesis initiation begins. The protein is Translation initiation factor IF-3 of Mycoplasma mycoides subsp. mycoides SC (strain CCUG 32753 / NCTC 10114 / PG1).